Reading from the N-terminus, the 190-residue chain is B3 domain-containing protein Os02g0764100 (190 aa).

The TF-B3 DNA-binding region spans 17 to 121 (FEKAVTPSDV…KLLFIDCKKN (105 aa)).

Its subcellular location is the nucleus. The chain is B3 domain-containing protein Os02g0764100 from Oryza sativa subsp. japonica (Rice).